The primary structure comprises 66 residues: Small ribosomal subunit protein bS21B (66 aa).

Positions 38–66 are disordered; the sequence is YVKPTQKRKIAKKAAISKAKKEARRSYSY.

Belongs to the bacterial ribosomal protein bS21 family.

The polypeptide is Small ribosomal subunit protein bS21B (Francisella tularensis subsp. tularensis (strain SCHU S4 / Schu 4)).